Here is a 242-residue protein sequence, read N- to C-terminus: Uridylate kinase (242 aa).

Position 11 to 14 (11 to 14 (KLSG)) interacts with ATP. Residues 19 to 24 (GEKGAG) form an involved in allosteric activation by GTP region. G53 contacts UMP. ATP contacts are provided by G54 and R58. Residues D73 and 134-141 (IGSPYFST) contribute to the UMP site. ATP contacts are provided by N162, Y168, and D171.

This sequence belongs to the UMP kinase family. As to quaternary structure, homohexamer.

It is found in the cytoplasm. The enzyme catalyses UMP + ATP = UDP + ADP. Its pathway is pyrimidine metabolism; CTP biosynthesis via de novo pathway; UDP from UMP (UMPK route): step 1/1. Its activity is regulated as follows. Allosterically activated by GTP. Inhibited by UTP. In terms of biological role, catalyzes the reversible phosphorylation of UMP to UDP. This chain is Uridylate kinase, found in Streptococcus pyogenes serotype M2 (strain MGAS10270).